Here is a 331-residue protein sequence, read N- to C-terminus: 5-formaminoimidazole-4-carboxamide-1-(beta)-D-ribofuranosyl 5'-monophosphate synthetase (331 aa).

2 residues coordinate 5-amino-1-(5-phospho-beta-D-ribosyl)imidazole-4-carboxamide: histidine 9 and serine 69. One can recognise an ATP-grasp domain in the interval valine 76–glutamate 322. ATP is bound by residues proline 120–tyrosine 179 and glutamate 201. Asparagine 229 is a binding site for 5-amino-1-(5-phospho-beta-D-ribosyl)imidazole-4-carboxamide. 2 residues coordinate Mg(2+): glutamate 267 and glutamate 280.

It belongs to the phosphohexose mutase family. Mg(2+) serves as cofactor. Requires Mn(2+) as cofactor.

The catalysed reaction is 5-amino-1-(5-phospho-beta-D-ribosyl)imidazole-4-carboxamide + formate + ATP = 5-formamido-1-(5-phospho-D-ribosyl)imidazole-4-carboxamide + ADP + phosphate. Its pathway is purine metabolism; IMP biosynthesis via de novo pathway; 5-formamido-1-(5-phospho-D-ribosyl)imidazole-4-carboxamide from 5-amino-1-(5-phospho-D-ribosyl)imidazole-4-carboxamide (formate route): step 1/1. Functionally, catalyzes the ATP- and formate-dependent formylation of 5-aminoimidazole-4-carboxamide-1-beta-d-ribofuranosyl 5'-monophosphate (AICAR) to 5-formaminoimidazole-4-carboxamide-1-beta-d-ribofuranosyl 5'-monophosphate (FAICAR) in the absence of folates. The protein is 5-formaminoimidazole-4-carboxamide-1-(beta)-D-ribofuranosyl 5'-monophosphate synthetase of Thermococcus kodakarensis (strain ATCC BAA-918 / JCM 12380 / KOD1) (Pyrococcus kodakaraensis (strain KOD1)).